The primary structure comprises 195 residues: Ras-related protein Rab-31 (195 aa).

GTP is bound by residues Gly-16, Gly-18, Lys-19, Ser-20, Ser-21, Asp-32, and His-33. Residue Ser-20 participates in Mg(2+) binding. Short sequence motifs (switch) lie at residues 30-42 (HFDH…IGAS) and 63-79 (AGQE…YRGS). Phosphoserine is present on Ser-36. GTP is bound by residues Thr-38, Gly-64, Asn-119, Asp-122, Ala-150, and Lys-151. Thr-38 lines the Mg(2+) pocket. 2 S-geranylgeranyl cysteine lipidation sites follow: Cys-194 and Cys-195.

Belongs to the small GTPase superfamily. Rab family. In terms of assembly, interacts (in GDP-bound form) with RIN3 and GAPVD1, which function as guanine exchange factors (GEF). Interacts (in GTP-bound form) with EEA1. Interacts with NGFR. Interacts with EGFR. Interacts with OCRL. Interacts (in GTP-bound form) with APPL2; interaction contributes to or enhances recruitment of APPL2 to the phagosomes; interaction enhances Fc-gamma receptor-mediated phagocytosis through PI3K/Akt signaling in macrophages. Mg(2+) serves as cofactor. In terms of tissue distribution, detected in brain astrocytes, spleen and intestine (at protein level).

Its subcellular location is the early endosome. The protein resides in the golgi apparatus. The protein localises to the trans-Golgi network. It is found in the trans-Golgi network membrane. It localises to the cytoplasmic vesicle. Its subcellular location is the phagosome. The protein resides in the phagosome membrane. It carries out the reaction GTP + H2O = GDP + phosphate + H(+). With respect to regulation, regulated by guanine nucleotide exchange factors (GEFs) including RIN3 and GAPVD1 which promote the exchange of bound GDP for free GTP. Regulated by GTPase activating proteins (GAPs) which increase the GTP hydrolysis activity. Inhibited by GDP dissociation inhibitors (GDIs) which prevent Rab-GDP dissociation. The small GTPases Rab are key regulators of intracellular membrane trafficking, from the formation of transport vesicles to their fusion with membranes. Rabs cycle between an inactive GDP-bound form and an active GTP-bound form that is able to recruit to membranes different set of downstream effectors directly responsible for vesicle formation, movement, tethering and fusion. Required for the integrity and for normal function of the Golgi apparatus and the trans-Golgi network. Plays a role in insulin-stimulated translocation of GLUT4 to the cell membrane. Plays a role in the maturation of phagosomes that engulf pathogens, such as S.aureus and Mycobacterium. Plays a role in M6PR transport from the trans-Golgi network to endosomes. Plays a role in the internalization of EGFR from the cell membrane into endosomes. This is Ras-related protein Rab-31 from Rattus norvegicus (Rat).